Consider the following 183-residue polypeptide: Ly6/PLAUR domain-containing protein 6B (183 aa).

A signal peptide spans 1–39 (MLYKSSDRPAHKVSMLLLCHALAIAVVQIVIFSESWAFA). Positions 60-151 (FKCFTCENAG…VELPTNHTNA (92 aa)) constitute a UPAR/Ly6 domain. Residues 60–154 (FKCFTCENAG…PTNHTNAVFA (95 aa)) are sufficient for inhibiting alpha-7 nAChR currents. Disulfide bonds link Cys-62–Cys-90, Cys-65–Cys-74, Cys-83–Cys-109, Cys-115–Cys-134, Cys-120–Cys-131, and Cys-135–Cys-140. Ser-164 carries the GPI-anchor amidated serine lipid modification. A propeptide spans 165 to 183 (SAPTLYLPVLAWVFVLPLL) (removed in mature form).

The protein localises to the cell membrane. Likely acts as a modulator of nicotinic acetylcholine receptors (nAChRs) activity. In vitro acts on nAChRs in a subtype- and stoichiometry-dependent manner. Modulates specifically alpha-3(3):beta-4(2) nAChRs by enhancing the sensitivity to ACh, decreasing ACh-induced maximal current response and increasing the rate of desensitization to ACh; has no effect on alpha-7 homomeric nAChRs; modulates alpha-3(2):alpha-5:beta-4(2) nAChRs in the context of CHRNA5/alpha-5 variant Asn-398 but not its wild-type sequence. However, according to another report in vitro it can weakly inhibits alpha-7 nAChRs. The polypeptide is Ly6/PLAUR domain-containing protein 6B (LYPD6B) (Homo sapiens (Human)).